The following is a 272-amino-acid chain: Protein SSO0103 (272 aa).

It belongs to the CinA family.

In Saccharolobus solfataricus (strain ATCC 35092 / DSM 1617 / JCM 11322 / P2) (Sulfolobus solfataricus), this protein is Protein SSO0103.